Consider the following 382-residue polypeptide: Dual-specificity RNA methyltransferase RlmN (382 aa).

The Proton acceptor role is filled by E91. Residues 97 to 339 enclose the Radical SAM core domain; the sequence is ETDRGTLCIS…TTVRKTRGDD (243 aa). A disulfide bond links C104 and C344. Positions 111, 115, and 118 each coordinate [4Fe-4S] cluster. S-adenosyl-L-methionine-binding positions include 165–166, S197, 219–221, and N301; these read GE and SLH. C344 acts as the S-methylcysteine intermediate in catalysis.

It belongs to the radical SAM superfamily. RlmN family. It depends on [4Fe-4S] cluster as a cofactor.

It localises to the cytoplasm. The enzyme catalyses adenosine(2503) in 23S rRNA + 2 reduced [2Fe-2S]-[ferredoxin] + 2 S-adenosyl-L-methionine = 2-methyladenosine(2503) in 23S rRNA + 5'-deoxyadenosine + L-methionine + 2 oxidized [2Fe-2S]-[ferredoxin] + S-adenosyl-L-homocysteine. It carries out the reaction adenosine(37) in tRNA + 2 reduced [2Fe-2S]-[ferredoxin] + 2 S-adenosyl-L-methionine = 2-methyladenosine(37) in tRNA + 5'-deoxyadenosine + L-methionine + 2 oxidized [2Fe-2S]-[ferredoxin] + S-adenosyl-L-homocysteine. In terms of biological role, specifically methylates position 2 of adenine 2503 in 23S rRNA and position 2 of adenine 37 in tRNAs. m2A2503 modification seems to play a crucial role in the proofreading step occurring at the peptidyl transferase center and thus would serve to optimize ribosomal fidelity. This is Dual-specificity RNA methyltransferase RlmN from Polaromonas naphthalenivorans (strain CJ2).